We begin with the raw amino-acid sequence, 790 residues long: Cadherin-18 (790 aa).

Positions 1-24 are cleaved as a signal peptide; it reads MKITSTSCICPVLVCLCFVQRCYG. A propeptide spanning residues 25–53 is cleaved from the precursor; sequence TTHHGSIRGTRNQTKHIEGETEVHHRPKR. Asparagine 36 carries an N-linked (GlcNAc...) asparagine glycan. Cadherin domains follow at residues 54 to 159, 160 to 268, 269 to 383, 384 to 486, and 487 to 608; these read GWVW…APKF, TDGP…PPRF, PQKH…PPLF, SMPS…DNPP, and ELAR…FLSS. At 54–608 the chain is on the extracellular side; that stretch reads GWVWNQFFVL…TCHAEAFLSS (555 aa). Asparagine 255 is a glycosylation site (N-linked (GlcNAc...) asparagine). Asparagine 455 and asparagine 536 each carry an N-linked (GlcNAc...) asparagine glycan. The helical transmembrane segment at 609 to 636 threads the bilayer; it reads AGLSTGALIAILLCVVILLAIVVLFITL. At 637 to 790 the chain is on the cytoplasmic side; that stretch reads RRSKKEPLII…YGEIESERTT (154 aa). Serine 786 bears the Phosphoserine mark.

The protein localises to the cell membrane. Its function is as follows. Cadherins are calcium-dependent cell adhesion proteins. They preferentially interact with themselves in a homophilic manner in connecting cells; cadherins may thus contribute to the sorting of heterogeneous cell types. This Bos taurus (Bovine) protein is Cadherin-18 (CDH18).